Reading from the N-terminus, the 549-residue chain is DNA polymerase lambda (549 aa).

The 100-residue stretch at 17-116 folds into the BRCT domain; sequence DPDGMFRGVS…ERLPEHKFAI (100 aa). Positions 126–197 are disordered; it reads KEGGAAGSGV…ASGDSKETIA (72 aa). A compositionally biased stretch (basic and acidic residues) spans 149–175; sequence PENRKETAGGNRESRDAIAHPNEDSDV. The segment covering 180–197 has biased composition (polar residues); sequence STCTSSQSASGDSKETIA. The tract at residues 233-247 is DNA-binding; it reads NIYRALGDDRRSFSY. Histidine 280 is a catalytic residue. Residues 315 to 318 are DNA-binding; sequence GPAT. Residues arginine 356, 387 to 390, and 396 to 399 each bind dCTP; these read SYRR and GDMD. Residues 390–399 are involved in primer binding; it reads RGKSSCGDMD. Aspartate 397, aspartate 399, and aspartate 464 together coordinate Mn(2+). The segment at 438-479 is DNA-binding; the sequence is IEGTDCGVDTYFGLCTYPGRELRHRIDLKVYPRNRHAFGLLA. Residue asparagine 487 participates in dCTP binding.

This sequence belongs to the DNA polymerase type-X family. In terms of assembly, interacts with PCNA. Mn(2+) is required as a cofactor. As to expression, expressed in proliferating tissues. Expressed in roots, root apex, young leaves, shoot apical meristem (SAM), flag leaves and panicles.

The protein localises to the nucleus. The catalysed reaction is DNA(n) + a 2'-deoxyribonucleoside 5'-triphosphate = DNA(n+1) + diphosphate. Repair polymerase involved in base excision repair (BER) and responsible for repair of lesions that give rise to abasic (AP) sites in DNA. Has both DNA polymerase and terminal transferase activities. Has a 5'-deoxyribose-5-phosphate lyase (dRP lyase) activity. The chain is DNA polymerase lambda from Oryza sativa subsp. japonica (Rice).